A 320-amino-acid chain; its full sequence is Membrane protein insertase YidC 2 (320 aa).

Positions 1-23 are cleaved as a signal peptide; the sequence is MKNLKKKLTLTGLMTAGLLFLSG. Residue cysteine 24 is the site of N-palmitoyl cysteine attachment. Cysteine 24 is lipidated: S-diacylglycerol cysteine. The next 5 membrane-spanning stretches (helical) occupy residues 68-88, 142-162, 178-198, 217-237, and 239-259; these read YGWGIIFVTLIIRFLILPLGL, MLSSIGCLPMLIQWPFFIALY, GIPLGHPSVVLVIISGVLYFI, AMLIMSPAMIVVFSFMSPAGV, and LYWAVGGFVIVIQQIIITFIM. A disordered region spans residues 270–320; sequence EFTKNPPKINNEGLKDVTPTSVQENFKEITSERNEKERKSGGRNAGKQNRK. The span at 294 to 309 shows a compositional bias: basic and acidic residues; that stretch reads NFKEITSERNEKERKS.

This sequence belongs to the OXA1/ALB3/YidC family. Type 2 subfamily.

It localises to the cell membrane. Its function is as follows. Required for the insertion and/or proper folding and/or complex formation of integral membrane proteins into the membrane. Involved in integration of membrane proteins that insert both dependently and independently of the Sec translocase complex, as well as at least some lipoproteins. The sequence is that of Membrane protein insertase YidC 2 from Lactococcus lactis subsp. lactis (strain IL1403) (Streptococcus lactis).